The primary structure comprises 530 residues: 2,3-bisphosphoglycerate-independent phosphoglycerate mutase (530 aa).

Residues aspartate 15 and serine 65 each contribute to the Mn(2+) site. Serine 65 serves as the catalytic Phosphoserine intermediate. Substrate contacts are provided by residues histidine 126, 155–156 (RD), arginine 187, arginine 193, 257–260 (RPDR), and lysine 330. The Mn(2+) site is built by aspartate 397, histidine 401, aspartate 438, histidine 439, and histidine 456.

It belongs to the BPG-independent phosphoglycerate mutase family. As to quaternary structure, monomer. The cofactor is Mn(2+).

It catalyses the reaction (2R)-2-phosphoglycerate = (2R)-3-phosphoglycerate. The protein operates within carbohydrate degradation; glycolysis; pyruvate from D-glyceraldehyde 3-phosphate: step 3/5. Functionally, catalyzes the interconversion of 2-phosphoglycerate and 3-phosphoglycerate. The chain is 2,3-bisphosphoglycerate-independent phosphoglycerate mutase from Synechococcus sp. (strain JA-2-3B'a(2-13)) (Cyanobacteria bacterium Yellowstone B-Prime).